Reading from the N-terminus, the 211-residue chain is Troponin I, cardiac muscle (211 aa).

Residue A1 is modified to N-acetylalanine. Residues 1 to 43 (ADESRDAAGEARPAPAPVRRRSSANYRAYATEPHAKSKKKISA) are disordered. Position 4 is a phosphoserine (S4). The residue at position 22 (S22) is a Phosphoserine; by PHK, PKA and PKD/PRKD1. S23 is modified (phosphoserine; by PKA and PKD/PRKD1). At Y26 the chain carries Phosphotyrosine. Phosphothreonine; by STK4/MST1 is present on T31. An involved in binding TNC region spans residues 32 to 79 (EPHAKSKKKISASRKLQLKTLMLQIAKQELEREAEERRGEKGRALSTR). Phosphoserine; by PKC/PRKCE is present on residues S42 and S44. T51 carries the phosphothreonine; by STK4/MST1 modification. Position 77 is a phosphoserine (S77). T78 is subject to Phosphothreonine. A phosphothreonine; by STK4/MST1 mark is found at T129 and T143. Residues 129 to 150 (TQKIFDLRGKFKRPTLRLRVRI) are involved in binding TNC and actin. S151 bears the Phosphoserine; by PAK3 mark. T182 bears the Phosphothreonine mark. Residue S200 is modified to Phosphoserine.

This sequence belongs to the troponin I family. Interacts with TRIM63. Binds to actin and tropomyosin. Interacts with STK4/MST1. In terms of processing, phosphorylated at Ser-22 and Ser-23 by PRKD1; phosphorylation reduces myofilament calcium sensitivity. Phosphorylated preferentially at Thr-31. Phosphorylation by STK4/MST1 alters its binding affinity to TNNC1 (cardiac Tn-C) and TNNT2 (cardiac Tn-T). Phosphorylated at Ser-42 and Ser-44 by PRKCE; phosphorylation increases myocardium contractile dysfunction. Ser-22 is one of three sites in the region of residues 1-48 that are phosphorylated by phosphorylase kinase.

Its function is as follows. Troponin I is the inhibitory subunit of troponin, the thin filament regulatory complex which confers calcium-sensitivity to striated muscle actomyosin ATPase activity. In Oryctolagus cuniculus (Rabbit), this protein is Troponin I, cardiac muscle (TNNI3).